A 245-amino-acid chain; its full sequence is Complement C1q subcomponent subunit A (245 aa).

Positions 1–22 are cleaved as a signal peptide; it reads METSQGWLVACVLAVTLVWTVA. The region spanning 31 to 109 is the Collagen-like domain; sequence GKDGVAGIPG…KGVKGNPGNI (79 aa). The disordered stretch occupies residues 35–111; sequence VAGIPGRPGR…VKGNPGNIRD (77 aa). 4-hydroxyproline occurs at positions 39 and 45. A 5-hydroxylysine modification is found at lysine 48. Lysine 48 carries O-linked (Gal...) hydroxylysine glycosylation. Position 54 is a 4-hydroxyproline (proline 54). Lysine 67 carries the post-translational modification 5-hydroxylysine. Lysine 67 is a glycosylation site (O-linked (Gal...) hydroxylysine). Proline 79 and proline 85 each carry 4-hydroxyproline. A 5-hydroxylysine modification is found at lysine 100. Lysine 100 is a glycosylation site (O-linked (Gal...) hydroxylysine). The C1q domain maps to 110–245; sequence RDQPRPAFSA…FSGFLIFPSA (136 aa). The N-linked (GlcNAc...) asparagine glycan is linked to asparagine 146. Cysteine 172 and cysteine 190 form a disulfide bridge. Glutamine 199 lines the Ca(2+) pocket.

In terms of assembly, core component of the complement C1 complex, a calcium-dependent complex composed of 1 molecule of the C1Q subcomplex, 2 molecules of C1R and 2 molecules of C1S. The C1Q subcomplex is composed 18 subunits: 3 chains of C1QA, C1QB, and C1QC trimerize to form 6 collagen-like triple helices connected to six globular ligand-recognition modules (C1q domain). Interacts with CR1 (via Sushi 24 and Sushi 25 domains). Interacts (via C-terminus) with CD33; this interaction activates CD33 inhibitory motifs. O-linked glycans are assumed to be the Glc-Gal disaccharides typically found as secondary modifications of hydroxylated lysines in collagen-like domains.

It is found in the secreted. The protein localises to the cell surface. The C1Q subcomplex is inhibited by sulfated molecules, such as triterpenoid sulfates, heparan sulfate, or chondroitin sulfates. Its function is as follows. Core component of the complement C1 complex, a multiprotein complex that initiates the classical pathway of the complement system, a cascade of proteins that leads to phagocytosis and breakdown of pathogens and signaling that strengthens the adaptive immune system. The classical complement pathway is initiated by the C1Q subcomplex of the C1 complex, which specifically binds IgG or IgM immunoglobulins complexed with antigens, forming antigen-antibody complexes on the surface of pathogens: C1QA, together with C1QB and C1QC, specifically recognizes and binds the Fc regions of IgG or IgM via its C1q domain. Immunoglobulin-binding activates the proenzyme C1R, which cleaves C1S, initiating the proteolytic cascade of the complement system. The C1Q subcomplex is activated by a hexamer of IgG complexed with antigens, while it is activated by a pentameric IgM. The C1Q subcomplex also recognizes and binds phosphatidylserine exposed on the surface of cells undergoing programmed cell death, possibly promoting activation of the complement system. This chain is Complement C1q subcomponent subunit A, found in Rattus norvegicus (Rat).